Here is a 389-residue protein sequence, read N- to C-terminus: Succinate--CoA ligase [ADP-forming] subunit beta (389 aa).

Residues Lys9–Arg244 form the ATP-grasp domain. ATP-binding positions include Lys46, Gly53–Gly55, Ile102, and Glu107. Residues Asn199 and Asp213 each contribute to the Mg(2+) site. Residues Asn264 and Gly321–Met323 each bind substrate.

Belongs to the succinate/malate CoA ligase beta subunit family. Heterotetramer of two alpha and two beta subunits. Mg(2+) serves as cofactor.

The catalysed reaction is succinate + ATP + CoA = succinyl-CoA + ADP + phosphate. It catalyses the reaction GTP + succinate + CoA = succinyl-CoA + GDP + phosphate. It functions in the pathway carbohydrate metabolism; tricarboxylic acid cycle; succinate from succinyl-CoA (ligase route): step 1/1. Its function is as follows. Succinyl-CoA synthetase functions in the citric acid cycle (TCA), coupling the hydrolysis of succinyl-CoA to the synthesis of either ATP or GTP and thus represents the only step of substrate-level phosphorylation in the TCA. The beta subunit provides nucleotide specificity of the enzyme and binds the substrate succinate, while the binding sites for coenzyme A and phosphate are found in the alpha subunit. This Protochlamydia amoebophila (strain UWE25) protein is Succinate--CoA ligase [ADP-forming] subunit beta.